The following is a 268-amino-acid chain: 4-hydroxy-tetrahydrodipicolinate reductase (268 aa).

NAD(+)-binding positions include G8 to M13 and D35. R36 serves as a coordination point for NADP(+). Residues G99–T101 and A123–F126 each bind NAD(+). Catalysis depends on H156, which acts as the Proton donor/acceptor. Position 157 (H157) interacts with (S)-2,3,4,5-tetrahydrodipicolinate. Residue K160 is the Proton donor of the active site. G166–T167 is a binding site for (S)-2,3,4,5-tetrahydrodipicolinate.

This sequence belongs to the DapB family.

The protein resides in the cytoplasm. The enzyme catalyses (S)-2,3,4,5-tetrahydrodipicolinate + NAD(+) + H2O = (2S,4S)-4-hydroxy-2,3,4,5-tetrahydrodipicolinate + NADH + H(+). It catalyses the reaction (S)-2,3,4,5-tetrahydrodipicolinate + NADP(+) + H2O = (2S,4S)-4-hydroxy-2,3,4,5-tetrahydrodipicolinate + NADPH + H(+). The protein operates within amino-acid biosynthesis; L-lysine biosynthesis via DAP pathway; (S)-tetrahydrodipicolinate from L-aspartate: step 4/4. In terms of biological role, catalyzes the conversion of 4-hydroxy-tetrahydrodipicolinate (HTPA) to tetrahydrodipicolinate. This is 4-hydroxy-tetrahydrodipicolinate reductase from Pseudomonas aeruginosa (strain LESB58).